Reading from the N-terminus, the 334-residue chain is Ornithine carbamoyltransferase (334 aa).

Carbamoyl phosphate-binding positions include 57–60 (STRT), Gln-84, Arg-108, and 135–138 (HPTQ). L-ornithine contacts are provided by residues Asn-169, Asp-233, and 237 to 238 (SM). Carbamoyl phosphate is bound by residues 275 to 276 (CL) and Arg-320.

Belongs to the aspartate/ornithine carbamoyltransferase superfamily. OTCase family.

It localises to the cytoplasm. It carries out the reaction carbamoyl phosphate + L-ornithine = L-citrulline + phosphate + H(+). Its pathway is amino-acid biosynthesis; L-arginine biosynthesis; L-arginine from L-ornithine and carbamoyl phosphate: step 1/3. Its function is as follows. Reversibly catalyzes the transfer of the carbamoyl group from carbamoyl phosphate (CP) to the N(epsilon) atom of ornithine (ORN) to produce L-citrulline. The protein is Ornithine carbamoyltransferase of Vibrio parahaemolyticus serotype O3:K6 (strain RIMD 2210633).